The primary structure comprises 381 residues: Cytochrome b (381 aa).

Transmembrane regions (helical) follow at residues 34–54 (FGSLLGICLITPILTGVMLAM), 78–99 (WMIRNLHANGASFFFICIYLHI), 114–134 (WNTGIILLLTLMATAFVGYVL), and 179–199 (FFALHFLLPFLIAGISIVHLT). Residues His-84 and His-98 each coordinate heme b. Residues His-183 and His-197 each coordinate heme b. Residue His-202 participates in a ubiquinone binding. 4 consecutive transmembrane segments (helical) span residues 227–247 (MKDLLGFTLLSLPFLALAFFT), 289–309 (LGGVLALAASVLILFTIPLLH), 321–341 (MSQILFWLLVANLFILTWVGS), and 348–368 (FIIIGQLASLSYFTILLFLFP).

Belongs to the cytochrome b family. The cytochrome bc1 complex contains 11 subunits: 3 respiratory subunits (MT-CYB, CYC1 and UQCRFS1), 2 core proteins (UQCRC1 and UQCRC2) and 6 low-molecular weight proteins (UQCRH/QCR6, UQCRB/QCR7, UQCRQ/QCR8, UQCR10/QCR9, UQCR11/QCR10 and a cleavage product of UQCRFS1). This cytochrome bc1 complex then forms a dimer. Heme b is required as a cofactor.

Its subcellular location is the mitochondrion inner membrane. Component of the ubiquinol-cytochrome c reductase complex (complex III or cytochrome b-c1 complex) that is part of the mitochondrial respiratory chain. The b-c1 complex mediates electron transfer from ubiquinol to cytochrome c. Contributes to the generation of a proton gradient across the mitochondrial membrane that is then used for ATP synthesis. The protein is Cytochrome b (MT-CYB) of Nothoprocta perdicaria (Chilean tinamou).